The sequence spans 371 residues: tRNA-specific 2-thiouridylase MnmA (371 aa).

Residues 8–15 (GMSGGVDS) and methionine 34 contribute to the ATP site. The segment at 94 to 96 (NPD) is interaction with target base in tRNA. The active-site Nucleophile is the cysteine 99. Cysteine 99 and cysteine 195 form a disulfide bridge. Glycine 123 lines the ATP pocket. The interaction with tRNA stretch occupies residues 145 to 147 (KDQ). Cysteine 195 acts as the Cysteine persulfide intermediate in catalysis. Positions 309–310 (RY) are interaction with tRNA.

The protein belongs to the MnmA/TRMU family.

It is found in the cytoplasm. It catalyses the reaction S-sulfanyl-L-cysteinyl-[protein] + uridine(34) in tRNA + AH2 + ATP = 2-thiouridine(34) in tRNA + L-cysteinyl-[protein] + A + AMP + diphosphate + H(+). Functionally, catalyzes the 2-thiolation of uridine at the wobble position (U34) of tRNA, leading to the formation of s(2)U34. The sequence is that of tRNA-specific 2-thiouridylase MnmA from Methylococcus capsulatus (strain ATCC 33009 / NCIMB 11132 / Bath).